Reading from the N-terminus, the 273-residue chain is Putative phosphoenolpyruvate synthase regulatory protein (273 aa).

Residue 153–160 (GVSRCGKT) coordinates ADP.

Belongs to the pyruvate, phosphate/water dikinase regulatory protein family. PSRP subfamily.

It carries out the reaction [pyruvate, water dikinase] + ADP = [pyruvate, water dikinase]-phosphate + AMP + H(+). The enzyme catalyses [pyruvate, water dikinase]-phosphate + phosphate + H(+) = [pyruvate, water dikinase] + diphosphate. Bifunctional serine/threonine kinase and phosphorylase involved in the regulation of the phosphoenolpyruvate synthase (PEPS) by catalyzing its phosphorylation/dephosphorylation. This Yersinia enterocolitica serotype O:8 / biotype 1B (strain NCTC 13174 / 8081) protein is Putative phosphoenolpyruvate synthase regulatory protein.